Here is a 367-residue protein sequence, read N- to C-terminus: Probable protein phosphatase 2C 57 (367 aa).

The interval Met1–Leu29 is disordered. The segment covering Gly7–Arg18 has biased composition (gly residues). The PPM-type phosphatase domain occupies Arg67–Phe331. Mn(2+) is bound by residues Asp111, Gly112, Asp279, and Asp322.

This sequence belongs to the PP2C family. Mg(2+) serves as cofactor. Requires Mn(2+) as cofactor.

It carries out the reaction O-phospho-L-seryl-[protein] + H2O = L-seryl-[protein] + phosphate. It catalyses the reaction O-phospho-L-threonyl-[protein] + H2O = L-threonyl-[protein] + phosphate. The protein is Probable protein phosphatase 2C 57 of Oryza sativa subsp. japonica (Rice).